A 178-amino-acid chain; its full sequence is Stage V sporulation protein T (178 aa).

Positions 5-51 (GIVRRIDDLGRVVIPKEIRRTLRIREGDPLEIFVDRDGEVILKKYSP) constitute a SpoVT-AbrB domain. The segment at 56–178 (GDFAKEYADA…AGFLARQMEQ (123 aa)) is GAF-like.

To B.subtilis AbrB and Abh. As to quaternary structure, homotetramer. Two monomers dimerize via their N-terminal swapped-hairpin domains. These dimers further associate into tetramers through helical interactions between their C-terminal GAF-like domains.

Functionally, transcriptional factor that positively regulates or negatively the expression of a large number of forespore-specific sigma G-dependent genes. May provide a mechanism of feedback control that is important for forespore development. SpoVT levels during spore formation have a major impact on the germination and the resistance of the resultant spores. This chain is Stage V sporulation protein T, found in Bacillus subtilis (strain 168).